A 3001-amino-acid polypeptide reads, in one-letter code: BEACH domain-containing protein C2 (3001 aa).

Disordered stretches follow at residues 43–80 (DFEQVSLGDQEKAANESQGDLQEPGSFSNSDHGRSSFG), 103–156 (DVQS…KATV), 1018–1076 (NVLA…NVGS), 1846–1868 (TFSSFQKPLEPPNNNAPPRPRDK), 2039–2071 (YSGTDHHGAAADYDDQTETKSDNGSKGSQSNPP), 2101–2132 (AEEHKRDEGRISGSHEHASRTSAGNSDPRTSN), and 2193–2212 (NLADHSDESQSGDQEKDRSW). Ser48 is modified (phosphoserine). Polar residues-rich tracts occupy residues 57–72 (NESQGDLQEPGSFSNS), 121–132 (SMQQSLSETSLD), and 1037–1050 (SPYNESGSVKQLDS). The segment covering 1854–1863 (LEPPNNNAPP) has biased composition (pro residues). The span at 2101–2119 (AEEHKRDEGRISGSHEHAS) shows a compositional bias: basic and acidic residues. A compositionally biased stretch (polar residues) spans 2120-2129 (RTSAGNSDPR). Residues 2151–2260 (ELDERILLEL…GRRNAYRAIV (110 aa)) enclose the BEACH-type PH domain. The segment covering 2196 to 2211 (DHSDESQSGDQEKDRS) has biased composition (basic and acidic residues). The BEACH domain maps to 2275–2564 (QRPEQLLRRT…QLLTVPHMKR (290 aa)). WD repeat units follow at residues 2679 to 2718 (SGIRSSSVIAITSDGEIITGGHADNSIKLVSSDGAKTLET), 2721 to 2760 (GHCAPVTCLALSPDNNFLVTGSRDSTVLLWRIHKAFTSRT), 2802 to 2841 (GHRRELVCCCVSSDQGVVVSSSESSDVLLHSIRKGRLIRR), 2842 to 2881 (LVGVKADSLCISSDGVIMAWSSSEGSISVFTINGVLIAKA), and 2953 to 2992 (GQGQDITALALNVDNTNLLVSTEDKQLIIFTDPALSLKVV).

The protein is BEACH domain-containing protein C2 of Arabidopsis thaliana (Mouse-ear cress).